Reading from the N-terminus, the 126-residue chain is Large ribosomal subunit protein eL18 (126 aa).

This sequence belongs to the eukaryotic ribosomal protein eL18 family.

This is Large ribosomal subunit protein eL18 from Methanosarcina mazei (strain ATCC BAA-159 / DSM 3647 / Goe1 / Go1 / JCM 11833 / OCM 88) (Methanosarcina frisia).